A 207-amino-acid polypeptide reads, in one-letter code: Ribonuclease HII (207 aa).

An RNase H type-2 domain is found at 20-207; it reads QLFAGVDEVG…KPVKRVLGIE (188 aa). The a divalent metal cation site is built by aspartate 26, glutamate 27, and aspartate 118.

This sequence belongs to the RNase HII family. It depends on Mn(2+) as a cofactor. Requires Mg(2+) as cofactor.

It is found in the cytoplasm. It carries out the reaction Endonucleolytic cleavage to 5'-phosphomonoester.. Endonuclease that specifically degrades the RNA of RNA-DNA hybrids. The protein is Ribonuclease HII of Aliivibrio fischeri (strain ATCC 700601 / ES114) (Vibrio fischeri).